The primary structure comprises 461 residues: MTQEFDCVVIGAGPSGYVAAITAAQSKLRTALIEEDQAGGTCLNRGCIPSKALIAGANVVSHIKHAEQFGIHVDGYTIDYPAMAKRKNTVVQGIRQGLEGLIRSNKITVLKGTGSLVSSTEVKVIGQDTTIIKANHIILATGSEPRPFPGVPFSSRILSSTGILELEVLPKKLAIIGGGVIGCEFASLFHTLGVEITVIEALDHILAVNNKEVSQTVTNKFTKQGIRILTKASISAIEESQNQVRITVNDQVEEFDYVLVAIGRQFNTASIGLDNAGVIRDDRGVIPVDETMRTNVPNIYAIGDITGKWLLAHVASHQGVIAAKNISGHHEVMDYSAIPSVIFTHPEIAMVGLSLQEAEQQNLPAKLTKFPFKAIGKAVALGASDGFAAIVSHEITQQILGAYVIGPHASSLIGEMTLAIRNELTLPCIYETVHAHPTLSEVWAEGALLATNHPLHFPPKS.

FAD contacts are provided by residues 34–42, K51, and G114; that span reads EEDQAGGTC. A disulfide bond links C42 and C47. NAD(+)-binding positions include 177-181, E200, and 261-264; these read GGGVI and AIGR. FAD is bound by residues D304 and A312. Catalysis depends on H436, which acts as the Proton acceptor.

The protein belongs to the class-I pyridine nucleotide-disulfide oxidoreductase family. Requires FAD as cofactor.

The protein localises to the cytoplasm. It carries out the reaction N(6)-[(R)-dihydrolipoyl]-L-lysyl-[protein] + NAD(+) = N(6)-[(R)-lipoyl]-L-lysyl-[protein] + NADH + H(+). The branched-chain alpha-keto dehydrogenase complex catalyzes the overall conversion of alpha-keto acids to acyl-CoA and CO(2). It contains multiple copies of 3 enzymatic components: branched-chain alpha-keto acid decarboxylase (E1), lipoamide acyltransferase (E2) and lipoamide dehydrogenase (E3). In Chlamydia pneumoniae (Chlamydophila pneumoniae), this protein is Dihydrolipoyl dehydrogenase (lpdA).